The primary structure comprises 195 residues: Alkyl hydroperoxide reductase C (195 aa).

In terms of domain architecture, Thioredoxin spans 4 to 170 (LTIGDQFPEY…VLRVLDALQS (167 aa)). An Isoglutamyl lysine isopeptide (Lys-Gln) (interchain with Q-Cter in protein Pup) cross-link involves residue Lys-41. Cys-61 acts as the Cysteine sulfenic acid (-SOH) intermediate in catalysis.

This sequence belongs to the peroxiredoxin family. AhpC/Prx1 subfamily. Homodimer; disulfide-linked, upon oxidation. 6 homodimers assemble to form a ring-like dodecamer. Identified in a complex with AhpD, DlaT and Lpd.

The protein localises to the cytoplasm. The catalysed reaction is N(6)-[(R)-dihydrolipoyl]-L-lysyl-[lipoyl-carrier protein] + a hydroperoxide = N(6)-[(R)-lipoyl]-L-lysyl-[lipoyl-carrier protein] + an alcohol + H2O. Thiol-specific peroxidase that catalyzes the reduction of hydrogen peroxide and organic hydroperoxides to water and alcohols, respectively. Plays a role in cell protection against oxidative stress by detoxifying peroxides. Together with AhpD, DlaT and Lpd, constitutes an NADH-dependent peroxidase active against hydrogen and alkyl peroxides as well as serving as a peroxynitrite reductase, thus protecting the bacterium against reactive nitrogen intermediates and oxidative stress generated by the host immune system. Does not however seem to play a role in detoxification of isoniazid. The protein is Alkyl hydroperoxide reductase C of Mycolicibacterium smegmatis (strain ATCC 700084 / mc(2)155) (Mycobacterium smegmatis).